Reading from the N-terminus, the 142-residue chain is Large ribosomal subunit protein uL11 (142 aa).

This sequence belongs to the universal ribosomal protein uL11 family. In terms of assembly, part of the ribosomal stalk of the 50S ribosomal subunit. Interacts with L10 and the large rRNA to form the base of the stalk. L10 forms an elongated spine to which L12 dimers bind in a sequential fashion forming a multimeric L10(L12)X complex. One or more lysine residues are methylated.

Forms part of the ribosomal stalk which helps the ribosome interact with GTP-bound translation factors. The sequence is that of Large ribosomal subunit protein uL11 from Haemophilus influenzae (strain 86-028NP).